Consider the following 279-residue polypeptide: Tryptophan 2,3-dioxygenase (279 aa).

Residues 48–52 (FIVIH), tyrosine 110, and arginine 114 contribute to the substrate site. Histidine 237 contacts heme. Threonine 251 provides a ligand contact to substrate.

Belongs to the tryptophan 2,3-dioxygenase family. As to quaternary structure, homotetramer. The cofactor is heme.

The enzyme catalyses L-tryptophan + O2 = N-formyl-L-kynurenine. Its pathway is amino-acid degradation; L-tryptophan degradation via kynurenine pathway; L-kynurenine from L-tryptophan: step 1/2. In terms of biological role, heme-dependent dioxygenase that catalyzes the oxidative cleavage of the L-tryptophan (L-Trp) pyrrole ring and converts L-tryptophan to N-formyl-L-kynurenine. Catalyzes the oxidative cleavage of the indole moiety. The protein is Tryptophan 2,3-dioxygenase of Exiguobacterium sibiricum (strain DSM 17290 / CCUG 55495 / CIP 109462 / JCM 13490 / 255-15).